We begin with the raw amino-acid sequence, 368 residues long: Phospho-N-acetylmuramoyl-pentapeptide-transferase (368 aa).

9 helical membrane passes run 2–22 (IALIIGMLVSLIVTLVGTPLL), 51–71 (TLGGVVINFAILLGWASSALY), 80–100 (PSWSAALVLFAMLSMGLLGFI), 117–137 (GGKFIGQFIFATIYAVLALLI), 167–187 (VAIILFVIWVNFLMTAWTNAV), 193–213 (LDGLAAGSSMIAFTGFGIIAF), 234–254 (PLDLTVIAVCAAVACFGFLWY), 271–291 (LGGLFAALSIATHTEFLAVVL), and 340–360 (FWMIELIFVLLALTIFYGDWV).

This sequence belongs to the glycosyltransferase 4 family. MraY subfamily. Mg(2+) serves as cofactor.

The protein localises to the cell membrane. The enzyme catalyses UDP-N-acetyl-alpha-D-muramoyl-L-alanyl-gamma-D-glutamyl-meso-2,6-diaminopimeloyl-D-alanyl-D-alanine + di-trans,octa-cis-undecaprenyl phosphate = di-trans,octa-cis-undecaprenyl diphospho-N-acetyl-alpha-D-muramoyl-L-alanyl-D-glutamyl-meso-2,6-diaminopimeloyl-D-alanyl-D-alanine + UMP. Its pathway is cell wall biogenesis; peptidoglycan biosynthesis. Functionally, catalyzes the initial step of the lipid cycle reactions in the biosynthesis of the cell wall peptidoglycan: transfers peptidoglycan precursor phospho-MurNAc-pentapeptide from UDP-MurNAc-pentapeptide onto the lipid carrier undecaprenyl phosphate, yielding undecaprenyl-pyrophosphoryl-MurNAc-pentapeptide, known as lipid I. The polypeptide is Phospho-N-acetylmuramoyl-pentapeptide-transferase (Bifidobacterium longum (strain DJO10A)).